Consider the following 171-residue polypeptide: Cation channel sperm-associated auxiliary subunit TMEM249 (171 aa).

Residues 1–2 (ML) are Cytoplasmic-facing. Residues 3 to 17 (FIICLVFISCNVLRE) form a helical membrane-spanning segment. The Extracellular segment spans residues 18-28 (VKYQETWCFPA). Residues 29–40 (YGMVIGLWLMLS) traverse the membrane as a helical segment. Residues 41–171 (SIPQRRLVLN…TKSSVNDLDV (131 aa)) lie on the Cytoplasmic side of the membrane.

As to quaternary structure, component of the CatSper complex or CatSpermasome composed of the core pore-forming members CATSPER1, CATSPER2, CATSPER3 and CATSPER4 as well as auxiliary members CATSPERB, CATSPERG2, CATSPERD, CATSPERE, CATSPERZ, C2CD6/CATSPERT, SLCO6C1, TMEM249, TMEM262 and EFCAB9. HSPA1 may be an additional auxiliary complex member. The core complex members CATSPER1, CATSPER2, CATSPER3 and CATSPER4 form a heterotetrameric channel. The auxiliary CATSPERB, CATSPERG2, CATSPERD and CATSPERE subunits form a pavilion-like structure over the pore which stabilizes the complex through interactions with CATSPER4, CATSPER3, CATSPER1 and CATSPER2 respectively. SLCO6C1 interacts with CATSPERE and TMEM262/CATSPERH interacts with CATSPERB, further stabilizing the complex. C2CD6/CATSPERT interacts at least with CATSPERD and is required for targeting the CatSper complex in the flagellar membrane.

It is found in the cell projection. Its subcellular location is the cilium. The protein localises to the flagellum membrane. Its function is as follows. Auxiliary component of the CatSper complex, a complex involved in sperm cell hyperactivation. This is Cation channel sperm-associated auxiliary subunit TMEM249 from Mus musculus (Mouse).